A 1949-amino-acid polypeptide reads, in one-letter code: MVLTLCFHSDRDHHFLSTLPLAEIRRLAPGGFSVFVPEDLLPHLSPSPSCPTPPLPRELTWSAACNPTNFPHLFRHHRPPPPCTRLTPRPPPPTPAPPSASTLPRVFHGGAPPAAFQPAIDFLHNTIQKDTIASSIIAALNPSLTSSLTLYPYALPPRWPSALNQAGIPATSYGHQSHPHPIHKTIETHLLHEHWANRATLPSTVMFMKRSKFDKLRVSNAALVKSASNFLHLLNPILTARDADRYTHLPLPDTLPSTPLYFMHHSLMYFSPSQIAGLFLAAPFLERLYASLVLPAESTIGSHPFFPSLYRYRTTGEHLHYVLEGNPSSSYTQPLTATQWLTTSSITAGDLHLTVTVLESWFSVHSILITRGVRPLELPRDIISLPSPDAVLLPNPSAFDIPLRSRLVPRDVCESLFVYVRAVRTLRTTDPAGFIRTQSNKAEFDWVTAEAWDHLAQFALLTAPVRPNTYFLPLLSPLAVVRHWLFRKQRPIFATLTLLSASTAAAIPIAIARLRTHSVTQLTILGHHFTPPKILARLPVALKRLIPKRLLPHLPSHLRPPPSWSPVFTLTFSELPKARFLTFPISGQTHTLLRQLHVPAILFAPQRPSRPLIFAGLLIGTVPVLYGAYRWFVSRFDPQTVYNRYSDLLHRPTWHLTFEREPLSCFPTPFLPHPSSHPRRARRLPPLPPAPPLPPQPPPPPPPQPSPHPPLFPASIPSPPPRPSSPPPPATSPASTPALTPIPAPKTAPPLTFPSPTLVAEPDAPVTARPSPLPLAPSRPFSELYPGHYADHSGSFFLQQPLVASSVPYPALDCLLVSCSAASGIPKEDLWATLCHIFPPSDLVSDLGLSTNHLTALAFTYQWLVTLRSGELVQRHGLLSAPFAFEITHTPPVPPATVGHFALSAPLTPTSACLTGGAPSPVISGPKASASLPRARFGPRPEAPRPPLTPPGFTPITEPTPATSPFALAALRFRLNRQPLPIRQVHAYSIALPRAKNLVSNLKNGFDGLVSSLPASDRTNLLPLIQALDHTADFPPARPPVGLIHIAGFAGCGKSYPIQQLLATQTFRHFRVVTPTTELRHEWKRALKLEGPSSWRVSTWETALAKRASVLVIDEVYKLPRGYLDLALLADPTVEFVIILGDPLQGSYNPTNPDSSNHRLIPEEDHLRPFIDFYCLWTRRLPRLVADFFGVPTTNPTRGHLAFASLNTTQSPLLVPSDSMARALTAGGHRAITYAASQGSTYPAPVHIFLDRNSNLVTNHVALVALTRSRSGVHFRPRAQDLPRHPQHLFTAFYKYAIDLLAHEADPSKPRPTPVDVTLLFQQQLRGLTILRDPSFSRITGGATHAFLAHAPLFTNLHGLRPTTFPDNLPTAPTYLARSLPYHQTESYPTSALPHRVFPASTTDWSAADDHPRVNPTFVAETRLPLQSELAPTLPSQPEPSPTYHSPATFETVYPGVDGEALARTFLAATDPLELEIFFRNNWSNQFPFINRPDTVACNPLTLVAPTHNQKQDPTLLHASLAKRLRFRDSTAPYTITAKDQALGYILYHSLQRAYCRSPEPVPFDPVLFASCIAENDFAQLTSKTQATIQANAFRSDPDWRHTFVRIFSKTQHKVNENSLFTSWKACQTLALMHDYLILVLGPVKKYQRILDSRDRPAHLYIHAGQTPHQLSEWCQNHLTPSVHLANDYTAFDQSQHGEAVVLEAWKMRRASIPEPFITLHVHVKTNIECQFGPLTCMRITGEPGTYDDNTDYNLAILYTQYLLHRTPVLVSGDDSLVDRVPPMNPSWPALAPLFALKPKPETSPFGLFCGYFVGPAGAVRAPRALFAKLAIALEDGSLPEKIASYVAEFSVGQSLGDSLWSLIPPELVIYQSACFDLICRHASPQLKLALRLGEVPDWGSLLSQLKLRFLTRPLFALLDAHTRVMVRTHKAHLLPSGHALHPSTEPFY.

Positions 77 to 103 are disordered; that stretch reads HRPPPPCTRLTPRPPPPTPAPPSASTL. Over residues 80-98 the composition is skewed to pro residues; the sequence is PPPCTRLTPRPPPPTPAPP. The 171-residue stretch at 171–341 folds into the Alphavirus-like MT domain; sequence TSYGHQSHPH…TQPLTATQWL (171 aa). Residues 674 to 773 are disordered; it reads PSSHPRRARR…APVTARPSPL (100 aa). Pro residues-rich tracts occupy residues 685–731 and 740–753; these read PPLP…PPAT and TPIP…PLTF. A Peptidase C21 domain is found at 762–922; sequence PDAPVTARPS…CLTGGAPSPV (161 aa). Catalysis depends on for protease activity residues Cys-814 and His-900. Positions 924 to 948 are disordered; the sequence is SGPKASASLPRARFGPRPEAPRPPL. One can recognise a (+)RNA virus helicase ATP-binding domain in the interval 1017–1175; that stretch reads DRTNLLPLIQ…HLRPFIDFYC (159 aa). 1048–1055 lines the ATP pocket; that stretch reads GFAGCGKS. In terms of domain architecture, (+)RNA virus helicase C-terminal spans 1176-1308; that stretch reads LWTRRLPRLV…DLLAHEADPS (133 aa). The region spanning 1682-1788 is the RdRp catalytic domain; that stretch reads SVHLANDYTA…DRVPPMNPSW (107 aa).

It belongs to the Tymoviridae non-structural replication polyprotein family. In terms of processing, specific enzymatic cleavages by the host yield mature proteins.

It carries out the reaction RNA(n) + a ribonucleoside 5'-triphosphate = RNA(n+1) + diphosphate. Its function is as follows. Acts as a cysteine protease, methyltransferase and deubiquitinase. The cysteine protease activity cleaves the polyprotein giving rise to mature proteins. The methyltransferase domain is probably involved in viral RNA capping. RNA-directed RNA polymerase is responsible for the replication and transcription of the genome. This chain is Non-structural replication polyprotein, found in Vitis vinifera (Grape).